A 160-amino-acid polypeptide reads, in one-letter code: Ribosomal RNA large subunit methyltransferase H (160 aa).

The S-adenosyl-L-methionine site is built by L76 and G108.

It belongs to the RNA methyltransferase RlmH family. As to quaternary structure, homodimer.

The protein resides in the cytoplasm. It carries out the reaction pseudouridine(1915) in 23S rRNA + S-adenosyl-L-methionine = N(3)-methylpseudouridine(1915) in 23S rRNA + S-adenosyl-L-homocysteine + H(+). Specifically methylates the pseudouridine at position 1915 (m3Psi1915) in 23S rRNA. In Rhodopseudomonas palustris (strain BisB18), this protein is Ribosomal RNA large subunit methyltransferase H.